A 198-amino-acid polypeptide reads, in one-letter code: Ribonuclease HII (198 aa).

Positions Gln10–Ser198 constitute an RNase H type-2 domain. Residues Asp16, Glu17, and Asp108 each coordinate a divalent metal cation.

This sequence belongs to the RNase HII family. Requires Mn(2+) as cofactor. The cofactor is Mg(2+).

It localises to the cytoplasm. The catalysed reaction is Endonucleolytic cleavage to 5'-phosphomonoester.. Its function is as follows. Endonuclease that specifically degrades the RNA of RNA-DNA hybrids. The chain is Ribonuclease HII from Escherichia coli O6:H1 (strain CFT073 / ATCC 700928 / UPEC).